The chain runs to 152 residues: Deoxyuridine 5'-triphosphate nucleotidohydrolase (152 aa).

Substrate contacts are provided by residues 71–73 (RSG), N84, 88–90 (LID), and M98.

It belongs to the dUTPase family. Mg(2+) is required as a cofactor.

It catalyses the reaction dUTP + H2O = dUMP + diphosphate + H(+). The protein operates within pyrimidine metabolism; dUMP biosynthesis; dUMP from dCTP (dUTP route): step 2/2. In terms of biological role, this enzyme is involved in nucleotide metabolism: it produces dUMP, the immediate precursor of thymidine nucleotides and it decreases the intracellular concentration of dUTP so that uracil cannot be incorporated into DNA. In Photorhabdus laumondii subsp. laumondii (strain DSM 15139 / CIP 105565 / TT01) (Photorhabdus luminescens subsp. laumondii), this protein is Deoxyuridine 5'-triphosphate nucleotidohydrolase.